A 433-amino-acid polypeptide reads, in one-letter code: MTAPTLNTTRSQELFSAAQALMPGGVSSPVRAFRSVGGQPLVFDRVKGPYAWDVDGNKYIDYIGSWGPAICGHAHPEVISALQEAIEKGTSFGAPCALENTLAEMVIDAVPSVEMVRFVNSGTEACMAVLRLMRAFTGRDKVIKFEGCYHGHADMFLVKAGSGVATLGLPDSPGVPRSTTANTLTAPYNDLEAVKQLFAENPDAISGVILEPIVGNAGFIQPEPGFLEGLRELTKEHGALLVFDEVMTGFRISYGGAQAHFGVTPDLTTMGKVIGGGLPVGAYGGRRDIMEMVAPAGPMYQAGTLSGNPLAMTAGIKTLELLRQPGTYEKLTATTEKLIAGIKEAASAAGLPITGGSVSAMFGFFLCEGPVRNFEEAKATDAERFGKLHRAMLQRGVYLAPSAFEAGFTSLAHSDGDIEATLQAFRESFAEIA.

At lysine 272 the chain carries N6-(pyridoxal phosphate)lysine.

Belongs to the class-III pyridoxal-phosphate-dependent aminotransferase family. HemL subfamily. Homodimer. Pyridoxal 5'-phosphate is required as a cofactor.

The protein localises to the cytoplasm. The enzyme catalyses (S)-4-amino-5-oxopentanoate = 5-aminolevulinate. It participates in porphyrin-containing compound metabolism; protoporphyrin-IX biosynthesis; 5-aminolevulinate from L-glutamyl-tRNA(Glu): step 2/2. The protein operates within porphyrin-containing compound metabolism; chlorophyll biosynthesis. The chain is Glutamate-1-semialdehyde 2,1-aminomutase from Synechococcus sp. (strain WH7803).